A 138-amino-acid polypeptide reads, in one-letter code: Class I hydrophobin 3 (138 aa).

The first 16 residues, 1-16 (MRFFLAITALVAAVTA), serve as a signal peptide directing secretion. Intrachain disulfides connect Cys40–Cys111, Cys48–Cys105, Cys49–Cys87, and Cys112–Cys130.

It belongs to the fungal hydrophobin family. As to quaternary structure, self-assembles to form functional amyloid fibrils called rodlets. Self-assembly into fibrillar rodlets occurs spontaneously at hydrophobic:hydrophilic interfaces and the rodlets further associate laterally to form amphipathic monolayers.

It localises to the secreted. Its subcellular location is the cell wall. Aerial growth, conidiation, and dispersal of filamentous fungi in the environment rely upon a capability of their secreting small amphipathic proteins called hydrophobins (HPBs) with low sequence identity. Class I can self-assemble into an outermost layer of rodlet bundles on aerial cell surfaces, conferring cellular hydrophobicity that supports fungal growth, development and dispersal; whereas Class II form highly ordered films at water-air interfaces through intermolecular interactions but contribute nothing to the rodlet structure. HYD3 is a class I hydrophobin that contributes to the formation of aerial hyphae and fruiting bodies. This chain is Class I hydrophobin 3, found in Cordyceps militaris (Caterpillar fungus).